A 157-amino-acid chain; its full sequence is Endoribonuclease YbeY (157 aa).

Residues His116, His120, and His126 each coordinate Zn(2+).

Belongs to the endoribonuclease YbeY family. The cofactor is Zn(2+).

Its subcellular location is the cytoplasm. Its function is as follows. Single strand-specific metallo-endoribonuclease involved in late-stage 70S ribosome quality control and in maturation of the 3' terminus of the 16S rRNA. The polypeptide is Endoribonuclease YbeY (Pseudarthrobacter chlorophenolicus (strain ATCC 700700 / DSM 12829 / CIP 107037 / JCM 12360 / KCTC 9906 / NCIMB 13794 / A6) (Arthrobacter chlorophenolicus)).